The primary structure comprises 313 residues: Probable cell division protein WhiA (313 aa).

The segment at residues Ser-278–Gly-311 is a DNA-binding region (H-T-H motif).

It belongs to the WhiA family.

Involved in cell division and chromosome segregation. The chain is Probable cell division protein WhiA from Halothermothrix orenii (strain H 168 / OCM 544 / DSM 9562).